Reading from the N-terminus, the 376-residue chain is Queuine tRNA-ribosyltransferase (376 aa).

The Proton acceptor role is filled by aspartate 89. Residues 89 to 93 (DSGGF), aspartate 143, glutamine 194, and glycine 221 each bind substrate. An RNA binding region spans residues 252 to 258 (GVGIPSN). The Nucleophile role is filled by aspartate 271. Residues 276-280 (ARNGR) are RNA binding; important for wobble base 34 recognition. Zn(2+) is bound by residues cysteine 309, cysteine 311, cysteine 314, and histidine 340.

This sequence belongs to the queuine tRNA-ribosyltransferase family. In terms of assembly, homodimer. Within each dimer, one monomer is responsible for RNA recognition and catalysis, while the other monomer binds to the replacement base PreQ1. Zn(2+) is required as a cofactor.

The catalysed reaction is 7-aminomethyl-7-carbaguanine + guanosine(34) in tRNA = 7-aminomethyl-7-carbaguanosine(34) in tRNA + guanine. It functions in the pathway tRNA modification; tRNA-queuosine biosynthesis. Functionally, catalyzes the base-exchange of a guanine (G) residue with the queuine precursor 7-aminomethyl-7-deazaguanine (PreQ1) at position 34 (anticodon wobble position) in tRNAs with GU(N) anticodons (tRNA-Asp, -Asn, -His and -Tyr). Catalysis occurs through a double-displacement mechanism. The nucleophile active site attacks the C1' of nucleotide 34 to detach the guanine base from the RNA, forming a covalent enzyme-RNA intermediate. The proton acceptor active site deprotonates the incoming PreQ1, allowing a nucleophilic attack on the C1' of the ribose to form the product. After dissociation, two additional enzymatic reactions on the tRNA convert PreQ1 to queuine (Q), resulting in the hypermodified nucleoside queuosine (7-(((4,5-cis-dihydroxy-2-cyclopenten-1-yl)amino)methyl)-7-deazaguanosine). This is Queuine tRNA-ribosyltransferase from Clostridium botulinum (strain Okra / Type B1).